The primary structure comprises 142 residues: Sec-independent protein translocase protein TatB (142 aa).

The chain crosses the membrane as a helical span at residues 1-21; it reads MFDIGASELLVLVIVAIVVIG. The interval 75–142 is disordered; that stretch reads RETAAQETAA…PAARPGSQQP (68 aa). The span at 76 to 94 shows a compositional bias: low complexity; sequence ETAAQETAAAQGQTPAAAE. Over residues 123-133 the composition is skewed to basic and acidic residues; sequence AKVEARVEEAP.

Belongs to the TatB family. In terms of assembly, the Tat system comprises two distinct complexes: a TatABC complex, containing multiple copies of TatA, TatB and TatC subunits, and a separate TatA complex, containing only TatA subunits. Substrates initially bind to the TatABC complex, which probably triggers association of the separate TatA complex to form the active translocon.

The protein resides in the cell inner membrane. In terms of biological role, part of the twin-arginine translocation (Tat) system that transports large folded proteins containing a characteristic twin-arginine motif in their signal peptide across membranes. Together with TatC, TatB is part of a receptor directly interacting with Tat signal peptides. TatB may form an oligomeric binding site that transiently accommodates folded Tat precursor proteins before their translocation. The polypeptide is Sec-independent protein translocase protein TatB (Novosphingobium aromaticivorans (strain ATCC 700278 / DSM 12444 / CCUG 56034 / CIP 105152 / NBRC 16084 / F199)).